We begin with the raw amino-acid sequence, 523 residues long: Translation initiation factor eIF2B subunit delta (523 aa).

The segment at 1–147 is disordered; sequence MAAVAVAVRE…PSGVKRLPEY (147 aa). An N-acetylalanine modification is found at alanine 2. Serine 12 carries the phosphoserine modification. The span at 30-40 shows a compositional bias: basic and acidic residues; sequence EMTKEEKLQLR. Positions 41–51 are enriched in basic residues; that stretch reads KEKKQQKKKRK. At threonine 86 the chain carries Phosphothreonine. Positions 87–121 are enriched in basic and acidic residues; it reads PREKVPAGRSKAELRAERRAKQEAERALKQARKGE. The residue at position 130 (serine 130) is a Phosphoserine. The may bind the chemical integrated stress response (ISR) inhibitor ISRIB stretch occupies residues 170-179; that stretch reads RKDYGSKVSL.

This sequence belongs to the eIF-2B alpha/beta/delta subunits family. In terms of assembly, component of the translation initiation factor 2B (eIF2B) complex which is a heterodecamer of two sets of five different subunits: alpha, beta, gamma, delta and epsilon. Subunits alpha, beta and delta comprise a regulatory subcomplex and subunits epsilon and gamma comprise a catalytic subcomplex. Within the complex, the hexameric regulatory complex resides at the center, with the two heterodimeric catalytic subcomplexes bound on opposite sides.

It localises to the cytoplasm. Its subcellular location is the cytosol. Activated by the chemical integrated stress response (ISR) inhibitor ISRIB which stimulates guanine nucleotide exchange factor activity for both phosphorylated and unphosphorylated eIF2. Acts as a component of the translation initiation factor 2B (eIF2B) complex, which catalyzes the exchange of GDP for GTP on eukaryotic initiation factor 2 (eIF2) gamma subunit. Its guanine nucleotide exchange factor activity is repressed when bound to eIF2 complex phosphorylated on the alpha subunit, thereby limiting the amount of methionyl-initiator methionine tRNA available to the ribosome and consequently global translation is repressed. The sequence is that of Translation initiation factor eIF2B subunit delta (EIF2B4) from Homo sapiens (Human).